The sequence spans 491 residues: HEPACAM family member 2 (491 aa).

Positions 1–18 are cleaved as a signal peptide; the sequence is MWLRVFTAFLSFTAGACS. N-linked (GlcNAc...) asparagine glycans are attached at residues N73, N117, and N153. Ig-like C2-type domains are found at residues 137 to 221 and 223 to 319; these read PVVQ…SDII and PTIY…THFT. Intrachain disulfides connect C158–C207 and C258–C303. An N-linked (GlcNAc...) asparagine glycan is attached at N308. Residues 340 to 360 traverse the membrane as a helical segment; sequence LASITGISLFLIISMCLLFLW. The Cytoplasmic portion of the chain corresponds to 361 to 491; the sequence is KKFQPYKVIK…GKHSRAKQCI (131 aa). Positions 444–454 are enriched in polar residues; the sequence is QQQDHPESSSQ. 2 disordered regions span residues 444–466 and 472–491; these read QQQD…DRHD and ELGH…KQCI. Basic and acidic residues predominate over residues 472 to 482; sequence ELGHCKEQDKG.

Post-translationally, poly-ADP-ribosylated (PARsylated) by tankyrase TNKS during late G2 and prophase, leading to translocation to mitotic centrosomes. N-glycosylated.

It is found in the golgi apparatus membrane. It localises to the cytoplasm. The protein resides in the cytoskeleton. The protein localises to the spindle. Its subcellular location is the microtubule organizing center. It is found in the centrosome. It localises to the midbody. Functionally, required during prometaphase for centrosome maturation. Following poly-ADP-ribosylation (PARsylation) by TNKS, translocates from the Golgi apparatus to mitotic centrosomes and plays a key role in the formation of robust microtubules for prompt movement of chromosomes: anchors AKAP9/CG-NAP, a scaffold protein of the gamma-tubulin ring complex and promotes centrosome maturation. This Bos taurus (Bovine) protein is HEPACAM family member 2 (HEPACAM2).